The primary structure comprises 1039 residues: Multidrug resistance protein MdtB (1039 aa).

12 consecutive transmembrane segments (helical) span residues 16-36, 342-362, 373-393, 396-416, 440-460, 472-492, 537-557, 863-883, 888-908, 911-931, 968-988, and 1002-1022; these read FILRPVATTLLMVAILLAGII, DVQFELLLAVALVVMVIYVFL, VAVPLSLIGTFAAMYFLGFSI, LTLMALTIATGFVVDDAIVVI, IGFTIISLTFSLVAVLIPLLF, FAVTLAVAILISAVVSLTLTP, WLTLGVAFSTLLLTVLLYLLI, LGGTLWLILAAVVAMYIVLGV, FIHPVTILSTLPTAGVGALLA, MAGSELDVIAIIGIILLIGIV, ILMTTLAALLGALPLMLSTGV, and GGLVMSQILTLFTTPVIYLLF.

It belongs to the resistance-nodulation-cell division (RND) (TC 2.A.6) family. MdtB subfamily. Part of a tripartite efflux system composed of MdtA, MdtB and MdtC. MdtB forms a heteromultimer with MdtC.

The protein resides in the cell inner membrane. The polypeptide is Multidrug resistance protein MdtB (Serratia proteamaculans (strain 568)).